The chain runs to 348 residues: N6-Methyl-AMP deaminase (348 aa).

Zn(2+)-binding residues include histidine 18 and histidine 20. N(6)-methyl-AMP is bound by residues histidine 20, asparagine 22, histidine 68, 100 to 103, aspartate 142, and glycine 175; that span reads STPR. Histidine 202 serves as a coordination point for Zn(2+). Glutamate 205, aspartate 287, and aspartate 288 together coordinate N(6)-methyl-AMP. The Proton donor role is filled by glutamate 205. Aspartate 287 contributes to the Zn(2+) binding site.

This sequence belongs to the metallo-dependent hydrolases superfamily. Adenosine and AMP deaminases family. In terms of assembly, monomer. It depends on Zn(2+) as a cofactor.

The catalysed reaction is N(6)-methyl-AMP + H2O + H(+) = IMP + methylamine. Its function is as follows. Catalyzes the hydrolysis of the free cytosolic methylated adenosine nucleotide N(6)-methyl-AMP (N6-mAMP) to produce inositol monophosphate (IMP) and methylamine. Is required for the catabolism of cytosolic N6-mAMP, which is derived from the degradation of mRNA containing N6-methylated adenine (m6A). This chain is N6-Methyl-AMP deaminase (mapda), found in Danio rerio (Zebrafish).